Reading from the N-terminus, the 287-residue chain is 4-diphosphocytidyl-2-C-methyl-D-erythritol kinase (287 aa).

Lysine 14 is a catalytic residue. 98 to 108 (PPGAGLGGGSS) contacts ATP. The active site involves aspartate 140.

It belongs to the GHMP kinase family. IspE subfamily.

The catalysed reaction is 4-CDP-2-C-methyl-D-erythritol + ATP = 4-CDP-2-C-methyl-D-erythritol 2-phosphate + ADP + H(+). It functions in the pathway isoprenoid biosynthesis; isopentenyl diphosphate biosynthesis via DXP pathway; isopentenyl diphosphate from 1-deoxy-D-xylulose 5-phosphate: step 3/6. In terms of biological role, catalyzes the phosphorylation of the position 2 hydroxy group of 4-diphosphocytidyl-2C-methyl-D-erythritol. This Methylacidiphilum infernorum (isolate V4) (Methylokorus infernorum (strain V4)) protein is 4-diphosphocytidyl-2-C-methyl-D-erythritol kinase.